A 446-amino-acid chain; its full sequence is Histidine--tRNA ligase (446 aa).

The protein belongs to the class-II aminoacyl-tRNA synthetase family. Homodimer.

It is found in the cytoplasm. It catalyses the reaction tRNA(His) + L-histidine + ATP = L-histidyl-tRNA(His) + AMP + diphosphate + H(+). The sequence is that of Histidine--tRNA ligase from Burkholderia pseudomallei (strain 1710b).